The primary structure comprises 283 residues: Heavy metal-associated isoprenylated plant protein 3 (283 aa).

Basic and acidic residues predominate over residues 1-22 (MGEKKNEGDNKKKGGDNKKKNE). The disordered stretch occupies residues 1–26 (MGEKKNEGDNKKKGGDNKKKNETPSI). 2 consecutive HMA domains span residues 25–88 (SITV…KKKV) and 132–195 (VTTA…KRAV). Positions 36 and 39 each coordinate Zn(2+). Residues 82–129 (EKTKKKVDLVSPQPKKEKEKENKNKNDEDKKKSEEKKKPDNNDKKPKE) show a composition bias toward basic and acidic residues. The interval 82–131 (EKTKKKVDLVSPQPKKEKEKENKNKNDEDKKKSEEKKKPDNNDKKPKETP) is disordered. Positions 143 and 146 each coordinate Zn(2+). Over residues 198 to 230 (VPPKKEKDKENGNENGEKKKGGGGDGGGKEKTG) the composition is skewed to basic and acidic residues. The disordered stretch occupies residues 198–238 (VPPKKEKDKENGNENGEKKKGGGGDGGGKEKTGNKGGGEGV). Cys-280 bears the Cysteine methyl ester mark. The S-farnesyl cysteine moiety is linked to residue Cys-280. A propeptide spans 281–283 (VVM) (removed in mature form).

This sequence belongs to the HIPP family.

It is found in the nucleus. Its subcellular location is the nucleolus. It localises to the cytoplasm. In terms of biological role, heavy-metal-binding protein. Binds high amounts of zinc. May act as an upstream regulator of the salicylate-dependent pathogen response. Involved in abiotic stress responses, and seed and flower development. This is Heavy metal-associated isoprenylated plant protein 3 from Arabidopsis thaliana (Mouse-ear cress).